The primary structure comprises 508 residues: Pancreatic alpha-amylase (508 aa).

The signal sequence occupies residues 1–15; it reads MKFVLLLSLIGFCWA. Gln-16 bears the Pyrrolidone carboxylic acid mark. 3 cysteine pairs are disulfide-bonded: Cys-43/Cys-101, Cys-85/Cys-130, and Cys-156/Cys-172. Positions 115, 170, and 179 each coordinate Ca(2+). Position 207 (Arg-207) interacts with chloride. Asp-209 serves as the catalytic Nucleophile. Position 213 (His-213) interacts with Ca(2+). Residue Glu-245 is the Proton donor of the active site. Chloride contacts are provided by Asn-310 and Arg-349. 2 disulfide bridges follow: Cys-390/Cys-396 and Cys-462/Cys-474.

The protein belongs to the glycosyl hydrolase 13 family. As to quaternary structure, monomer. Ca(2+) is required as a cofactor. Chloride serves as cofactor.

It localises to the secreted. The protein localises to the extracellular space. The enzyme catalyses Endohydrolysis of (1-&gt;4)-alpha-D-glucosidic linkages in polysaccharides containing three or more (1-&gt;4)-alpha-linked D-glucose units.. The protein is Pancreatic alpha-amylase (Amy2) of Rattus norvegicus (Rat).